We begin with the raw amino-acid sequence, 446 residues long: Transcription factor SOX-8 (446 aa).

3 disordered regions span residues 1–58 (MLDM…DPAE), 155–259 (AERL…RQNI), and 318–378 (HKSA…PFAG). The span at 40 to 53 (EGLGRAGVAVGGAR) shows a compositional bias: gly residues. The segment at 58–100 (EAADERFPACIRDAVSQVLKGYDWSLVPMPVRGGGGGALKAKP) is dimerization (DIM). Residues 102-170 (VKRPMNAFMV…QHKKDHPDYK (69 aa)) constitute a DNA-binding region (HMG box). Basic and acidic residues-rich tracts occupy residues 155 to 171 (AERL…DYKY), 210 to 219 (DGHHHGDHTG), and 242 to 253 (PELKLEGRRPVD). The tract at residues 224–298 (PPTPPTTPKT…LPLGGPAPPE (75 aa)) is transactivation domain (TAM). Positions 335–446 (RPHIKTEQPS…QPVYTTLTRP (112 aa)) are transactivation domain (TAC). The segment covering 362 to 378 (SGQSSATPAAPAGPFAG) has biased composition (low complexity). Residues 400–408 (PGLYQYPCF) carry the 9aaTAD motif. Positions 425 to 446 (LPPAHSPTSHWDQPVYTTLTRP) are disordered. Positions 430-446 (SPTSHWDQPVYTTLTRP) are enriched in polar residues.

It is found in the nucleus. Functionally, transcription factor that may play a role in central nervous system, limb and facial development. May be involved in male sex determination. Binds the consensus motif 5'-[AT][AT]CAA[AT]G-3'. This is Transcription factor SOX-8 from Homo sapiens (Human).